A 269-amino-acid chain; its full sequence is Cell cycle regulator CcrZ (269 aa).

Positions 39, 76, 77, 78, and 80 each coordinate ATP. The short motif at 164–171 is the Brenner's motif [HXDhX3N] element; that stretch reads HCDVNHNN. The Proton acceptor role is filled by Asp166. Residues 180 to 203 carry the APH motif; it reads LYLIDWDGAMIADPAMDLGPLLYH.

This sequence belongs to the aminoglycoside phosphotransferase family. In terms of assembly, monomer in solution. Interacts with DnaA (via domains I (1-82) and III (111-326)). Interacts with DnaB. Interacts with FtsZ.

Its subcellular location is the cytoplasm. The enzyme catalyses D-ribose + ATP = D-ribose 5-phosphate + ADP + H(+). The catalysed reaction is 2-deoxy-D-ribose + ATP = 2-deoxy-D-ribose 5-phosphate + ADP + H(+). With respect to regulation, activated by D-ribose and 2-deoxy-D-ribose. Slightly activated by kanamycin and gentamicin. Plays a role in cell cycle regulation and chromosome integrity. Activates DnaA-dependent chromosomal DNA replication initiation ensuring that the chromosome is replicated at the right time during the cell cycle. May regulate replication initiation through phosphorylation of a possible second messenger or metabolite, and by interacting with replication initiation proteins. Has ATPase activity with D-ribose and 2-deoxy-D-ribose in vitro, but not with choline. Involved in DNA damage response. This chain is Cell cycle regulator CcrZ, found in Bacillus subtilis (strain 168).